A 253-amino-acid polypeptide reads, in one-letter code: Phycocyanobilin:ferredoxin oxidoreductase (253 aa).

The protein belongs to the HY2 family.

The catalysed reaction is (2R,3Z)-phycocyanobilin + 4 oxidized [2Fe-2S]-[ferredoxin] = biliverdin IXalpha + 4 reduced [2Fe-2S]-[ferredoxin] + 4 H(+). Its function is as follows. Catalyzes the four-electron reduction of biliverdin IX-alpha (2-electron reduction at both the A and D rings); the reaction proceeds via an isolatable 2-electron intermediate, 181,182-dihydrobiliverdin. The polypeptide is Phycocyanobilin:ferredoxin oxidoreductase (pcyA) (Gloeobacter violaceus (strain ATCC 29082 / PCC 7421)).